The following is a 94-amino-acid chain: CRISPR-associated endoribonuclease Cas2 1 (94 aa).

Asp-8 provides a ligand contact to Mg(2+).

Belongs to the CRISPR-associated endoribonuclease Cas2 protein family. Homodimer, forms a heterotetramer with a Cas1 homodimer. It depends on Mg(2+) as a cofactor.

Its function is as follows. CRISPR (clustered regularly interspaced short palindromic repeat), is an adaptive immune system that provides protection against mobile genetic elements (viruses, transposable elements and conjugative plasmids). CRISPR clusters contain sequences complementary to antecedent mobile elements and target invading nucleic acids. CRISPR clusters are transcribed and processed into CRISPR RNA (crRNA). Involved in the integration of spacer DNA into the CRISPR cassette. Functions as a ssRNA-specific endoribonuclease. This Archaeoglobus fulgidus (strain ATCC 49558 / DSM 4304 / JCM 9628 / NBRC 100126 / VC-16) protein is CRISPR-associated endoribonuclease Cas2 1 (cas21).